The chain runs to 486 residues: ATP synthase subunit beta (486 aa).

164 to 171 (GGAGVGKT) contributes to the ATP binding site.

This sequence belongs to the ATPase alpha/beta chains family. F-type ATPases have 2 components, CF(1) - the catalytic core - and CF(0) - the membrane proton channel. CF(1) has five subunits: alpha(3), beta(3), gamma(1), delta(1), epsilon(1). CF(0) has four main subunits: a(1), b(1), b'(1) and c(9-12).

It localises to the cellular thylakoid membrane. The catalysed reaction is ATP + H2O + 4 H(+)(in) = ADP + phosphate + 5 H(+)(out). Functionally, produces ATP from ADP in the presence of a proton gradient across the membrane. The catalytic sites are hosted primarily by the beta subunits. In Prochlorococcus marinus (strain AS9601), this protein is ATP synthase subunit beta.